A 320-amino-acid polypeptide reads, in one-letter code: Malate dehydrogenase (320 aa).

NAD(+) contacts are provided by residues 10–15 (GAGQIG) and D34. Positions 83 and 89 each coordinate substrate. Residues N96 and 119-121 (ITN) each bind NAD(+). N121 and R152 together coordinate substrate. H176 functions as the Proton acceptor in the catalytic mechanism.

Belongs to the LDH/MDH superfamily. MDH type 3 family.

It carries out the reaction (S)-malate + NAD(+) = oxaloacetate + NADH + H(+). Catalyzes the reversible oxidation of malate to oxaloacetate. In Methylorubrum extorquens (strain CM4 / NCIMB 13688) (Methylobacterium extorquens), this protein is Malate dehydrogenase.